Consider the following 142-residue polypeptide: Nucleoside diphosphate kinase (142 aa).

Residues Lys11, Phe59, Arg87, Thr93, Arg104, and Asn114 each contribute to the ATP site. His117 serves as the catalytic Pros-phosphohistidine intermediate.

It belongs to the NDK family. Homotetramer. Mg(2+) serves as cofactor.

It localises to the cytoplasm. It carries out the reaction a 2'-deoxyribonucleoside 5'-diphosphate + ATP = a 2'-deoxyribonucleoside 5'-triphosphate + ADP. The enzyme catalyses a ribonucleoside 5'-diphosphate + ATP = a ribonucleoside 5'-triphosphate + ADP. Functionally, major role in the synthesis of nucleoside triphosphates other than ATP. The ATP gamma phosphate is transferred to the NDP beta phosphate via a ping-pong mechanism, using a phosphorylated active-site intermediate. In Salinibacter ruber (strain DSM 13855 / M31), this protein is Nucleoside diphosphate kinase.